The sequence spans 516 residues: Squalene epoxidase 5 (516 aa).

The next 2 membrane-spanning stretches (helical) occupy residues 3–23 and 45–65; these read FTNV…VFYV and ATDV…YALA. Residues 55-56, 75-76, arginine 83, phenylalanine 88, arginine 156, valine 172, aspartate 335, and methionine 348 contribute to the FAD site; these read VG and ER. A helical membrane pass occupies residues 446–466; the sequence is LIYHLCAITLSSIGHLLSPFP.

The protein belongs to the squalene monooxygenase family. The cofactor is FAD. As to expression, expressed in seedlings, leaves, stems and inflorescences. Detected in siliques.

Its subcellular location is the membrane. The enzyme catalyses squalene + reduced [NADPH--hemoprotein reductase] + O2 = (S)-2,3-epoxysqualene + oxidized [NADPH--hemoprotein reductase] + H2O + H(+). It functions in the pathway terpene metabolism; lanosterol biosynthesis; lanosterol from farnesyl diphosphate: step 2/3. Its function is as follows. Catalyzes the stereospecific oxidation of squalene to (S)-2,3-epoxysqualene, and is considered to be a rate-limiting enzyme in steroid biosynthesis. The sequence is that of Squalene epoxidase 5 (SQE5) from Arabidopsis thaliana (Mouse-ear cress).